The chain runs to 286 residues: Bifunctional protein FolD (286 aa).

NADP(+) contacts are provided by residues Gly-166–Ser-168 and Ile-232.

This sequence belongs to the tetrahydrofolate dehydrogenase/cyclohydrolase family. In terms of assembly, homodimer.

It catalyses the reaction (6R)-5,10-methylene-5,6,7,8-tetrahydrofolate + NADP(+) = (6R)-5,10-methenyltetrahydrofolate + NADPH. The enzyme catalyses (6R)-5,10-methenyltetrahydrofolate + H2O = (6R)-10-formyltetrahydrofolate + H(+). The protein operates within one-carbon metabolism; tetrahydrofolate interconversion. In terms of biological role, catalyzes the oxidation of 5,10-methylenetetrahydrofolate to 5,10-methenyltetrahydrofolate and then the hydrolysis of 5,10-methenyltetrahydrofolate to 10-formyltetrahydrofolate. The polypeptide is Bifunctional protein FolD (Vibrio parahaemolyticus serotype O3:K6 (strain RIMD 2210633)).